Here is a 375-residue protein sequence, read N- to C-terminus: Filamin-binding LIM protein 1 (375 aa).

Positions Met1–Ala70 are filamin-binding. Disordered regions lie at residues Trp43–Glu119 and His137–Val176. Pro residues-rich tracts occupy residues Phe104–Leu114 and Pro140–Ala149. A compositionally biased stretch (low complexity) spans Pro150–Ser159. LIM zinc-binding domains follow at residues Asp183–Arg244, Cys245–Ala302, and Pro303–Ala372. An FERMT2-binding region spans residues Ile278 to Cys375.

Interacts with FERMT2, FLNA, FLNB and FLNC. Interacts with NKX2-5.

The protein localises to the cell junction. The protein resides in the focal adhesion. Its subcellular location is the cytoplasm. It is found in the cytoskeleton. It localises to the stress fiber. Its function is as follows. Serves as an anchoring site for cell-ECM adhesion proteins and filamin-containing actin filaments. Is implicated in cell shape modulation (spreading) and motility. May participate in the regulation of filamin-mediated cross-linking and stabilization of actin filaments. May also regulate the assembly of filamin-containing signaling complexes that control actin assembly. Promotes dissociation of FLNA from ITGB3 and ITGB7. Promotes activation of integrins and regulates integrin-mediated cell-cell adhesion. This chain is Filamin-binding LIM protein 1 (FBLIM1), found in Pongo abelii (Sumatran orangutan).